A 701-amino-acid chain; its full sequence is Putative pectinesterase/pectinesterase inhibitor 43 (701 aa).

Positions 1-22 (MNKYVLLGVTALIMAMVICVEA) are cleaved as a signal peptide. The pectinesterase inhibitor 43 stretch occupies residues 42–195 (MITKTTVSII…QHLTSNGLAI (154 aa)). Low complexity-rich tracts occupy residues 221-256 (GILG…VDSS) and 263-275 (SSSE…SSNN). The segment at 221 to 351 (GILGSGSSRD…DPLRKLNPLN (131 aa)) is disordered. A glycan (N-linked (GlcNAc...) asparagine) is linked at asparagine 267. Polar residues-rich tracts occupy residues 276-287 (RPLDSSKNQQME) and 313-338 (QKST…SSEN). A pectinesterase 43 region spans residues 391-688 (NVVVAKDGSG…FAPGNFLRGN (298 aa)). Residues threonine 467 and glutamine 497 each coordinate substrate. The active-site Proton donor; for pectinesterase activity is aspartate 520. A disulfide bridge links cysteine 534 with cysteine 554. Residue aspartate 541 is the Nucleophile; for pectinesterase activity of the active site. Residues arginine 609 and tryptophan 611 each contribute to the substrate site. An N-linked (GlcNAc...) asparagine glycan is attached at asparagine 637.

In the N-terminal section; belongs to the PMEI family. This sequence in the C-terminal section; belongs to the pectinesterase family. Expressed in flower buds.

The protein localises to the secreted. The protein resides in the cell wall. The catalysed reaction is [(1-&gt;4)-alpha-D-galacturonosyl methyl ester](n) + n H2O = [(1-&gt;4)-alpha-D-galacturonosyl](n) + n methanol + n H(+). It participates in glycan metabolism; pectin degradation; 2-dehydro-3-deoxy-D-gluconate from pectin: step 1/5. In terms of biological role, acts in the modification of cell walls via demethylesterification of cell wall pectin. This Arabidopsis thaliana (Mouse-ear cress) protein is Putative pectinesterase/pectinesterase inhibitor 43 (PME43).